The chain runs to 323 residues: Aspartate carbamoyltransferase catalytic subunit (323 aa).

Positions 71 and 72 each coordinate carbamoyl phosphate. K99 provides a ligand contact to L-aspartate. Carbamoyl phosphate-binding residues include R121, H151, and Q154. L-aspartate is bound by residues R184 and R239. 2 residues coordinate carbamoyl phosphate: G280 and P281.

It belongs to the aspartate/ornithine carbamoyltransferase superfamily. ATCase family. In terms of assembly, heterododecamer (2C3:3R2) of six catalytic PyrB chains organized as two trimers (C3), and six regulatory PyrI chains organized as three dimers (R2).

It catalyses the reaction carbamoyl phosphate + L-aspartate = N-carbamoyl-L-aspartate + phosphate + H(+). The protein operates within pyrimidine metabolism; UMP biosynthesis via de novo pathway; (S)-dihydroorotate from bicarbonate: step 2/3. Its function is as follows. Catalyzes the condensation of carbamoyl phosphate and aspartate to form carbamoyl aspartate and inorganic phosphate, the committed step in the de novo pyrimidine nucleotide biosynthesis pathway. In Cupriavidus taiwanensis (strain DSM 17343 / BCRC 17206 / CCUG 44338 / CIP 107171 / LMG 19424 / R1) (Ralstonia taiwanensis (strain LMG 19424)), this protein is Aspartate carbamoyltransferase catalytic subunit.